The sequence spans 319 residues: uncharacterized protein (319 aa).

In terms of domain architecture, MPN spans 29–164; that stretch reads VNISSLALLK…LDAFRSVNPL (136 aa). Positions 111, 113, and 124 each coordinate Zn(2+). The short motif at 111–124 is the JAMM motif element; that stretch reads HSHPGFGCWLSSVD.

The protein belongs to the peptidase M67A family.

This is an uncharacterized protein from Caenorhabditis elegans.